Consider the following 218-residue polypeptide: Ras-related protein RABE1e (218 aa).

Glycine 22–serine 29 is a GTP binding site. The Effector region motif lies at phenylalanine 44–phenylalanine 52. Residues aspartate 70–glutamine 74, asparagine 128–aspartate 131, and serine 159–alanine 160 each bind GTP. The tract at residues threonine 182–valine 218 is disordered. Residues asparagine 201 to lysine 211 are compositionally biased toward polar residues. 2 S-geranylgeranyl cysteine lipidation sites follow: cysteine 214 and cysteine 215.

Belongs to the small GTPase superfamily. Rab family. As to quaternary structure, interacts with PI5K2.

Its subcellular location is the golgi apparatus membrane. It localises to the cell membrane. In terms of biological role, involved in membrane trafficking from the Golgi to the plasma membrane. This is Ras-related protein RABE1e (RABE1E) from Arabidopsis thaliana (Mouse-ear cress).